A 293-amino-acid chain; its full sequence is Ribosomal RNA small subunit methyltransferase H (293 aa).

S-adenosyl-L-methionine contacts are provided by residues 32–34 (GGH), Asp-51, Phe-78, Asp-99, and Gln-106. Residues 271 to 293 (PGTEEIRENPPSRSAKLRVAKRI) form a disordered region.

It belongs to the methyltransferase superfamily. RsmH family.

Its subcellular location is the cytoplasm. The catalysed reaction is cytidine(1402) in 16S rRNA + S-adenosyl-L-methionine = N(4)-methylcytidine(1402) in 16S rRNA + S-adenosyl-L-homocysteine + H(+). In terms of biological role, specifically methylates the N4 position of cytidine in position 1402 (C1402) of 16S rRNA. This is Ribosomal RNA small subunit methyltransferase H from Persephonella marina (strain DSM 14350 / EX-H1).